A 341-amino-acid polypeptide reads, in one-letter code: tRNA N6-adenosine threonylcarbamoyltransferase (341 aa).

Fe cation is bound by residues histidine 115 and histidine 119. Residues 138–142 (LVSGG), aspartate 171, glycine 184, and asparagine 276 each bind substrate. Aspartate 304 is a binding site for Fe cation.

This sequence belongs to the KAE1 / TsaD family. Fe(2+) serves as cofactor.

The protein resides in the cytoplasm. The enzyme catalyses L-threonylcarbamoyladenylate + adenosine(37) in tRNA = N(6)-L-threonylcarbamoyladenosine(37) in tRNA + AMP + H(+). Its function is as follows. Required for the formation of a threonylcarbamoyl group on adenosine at position 37 (t(6)A37) in tRNAs that read codons beginning with adenine. Is involved in the transfer of the threonylcarbamoyl moiety of threonylcarbamoyl-AMP (TC-AMP) to the N6 group of A37, together with TsaE and TsaB. TsaD likely plays a direct catalytic role in this reaction. The chain is tRNA N6-adenosine threonylcarbamoyltransferase from Stenotrophomonas maltophilia (strain K279a).